We begin with the raw amino-acid sequence, 444 residues long: Homogentisate 1,2-dioxygenase (444 aa).

Histidine 298 serves as the catalytic Proton acceptor. Residues histidine 341 and glutamate 347 each coordinate Fe cation. The homogentisate site is built by tyrosine 356 and histidine 377. Position 377 (histidine 377) interacts with Fe cation.

The protein belongs to the homogentisate dioxygenase family. As to quaternary structure, hexamer; dimer of trimers. Fe cation serves as cofactor.

The catalysed reaction is homogentisate + O2 = 4-maleylacetoacetate + H(+). It participates in amino-acid degradation; L-phenylalanine degradation; acetoacetate and fumarate from L-phenylalanine: step 4/6. Functionally, involved in the catabolism of homogentisate (2,5-dihydroxyphenylacetate or 2,5-OH-PhAc), a central intermediate in the degradation of phenylalanine and tyrosine. Catalyzes the oxidative ring cleavage of the aromatic ring of homogentisate to yield maleylacetoacetate. This is Homogentisate 1,2-dioxygenase from Burkholderia ambifaria (strain ATCC BAA-244 / DSM 16087 / CCUG 44356 / LMG 19182 / AMMD) (Burkholderia cepacia (strain AMMD)).